The chain runs to 55 residues: Mitochondrial import receptor subunit TOM7 homolog (55 aa).

The Cytoplasmic segment spans residues 1-20 (MVKLSKEAKQRLQQLFKGGQ). The chain crosses the membrane as a helical span at residues 21–36 (FAIRWGFIPLVIYLGF). Topologically, residues 37 to 55 (KRGADPGMPEPTVLSLLWG) are mitochondrial intermembrane.

Belongs to the Tom7 family. Forms part of the preprotein translocase complex of the outer mitochondrial membrane (TOM complex) which consists of at least 7 different proteins (TOMM5, TOMM6, TOMM7, TOMM20, TOMM22, TOMM40 and TOMM70).

The protein localises to the mitochondrion outer membrane. Its function is as follows. Required for assembly and stability of the TOM complex. Positive regulator of PRKN translocation to damaged mitochondria. Acts probably by stabilizing PINK1 on the outer membrane of depolarized mitochondria. This is Mitochondrial import receptor subunit TOM7 homolog (TOMM7) from Bos taurus (Bovine).